The sequence spans 250 residues: UPF0309 protein BH0227 (250 aa).

Residues 31 to 214 (VAESIQNGGI…KRMADNGYEP (184 aa)) form the SIS domain.

This sequence belongs to the UPF0309 family.

The protein is UPF0309 protein BH0227 of Halalkalibacterium halodurans (strain ATCC BAA-125 / DSM 18197 / FERM 7344 / JCM 9153 / C-125) (Bacillus halodurans).